The following is a 180-amino-acid chain: PRA1 family protein F1 (180 aa).

The next 4 membrane-spanning stretches (helical) occupy residues 63 to 83 (ANTV…VFLS), 84 to 104 (LIWN…WLFL), 123 to 143 (IVLI…DAKL), and 145 to 165 (IAVA…VRKT).

The protein belongs to the PRA1 family. In terms of assembly, interacts with PRA1F2. Expressed in hypocotyls, leaf bases and shoot apex.

The protein localises to the endosome membrane. Functionally, may be involved in both secretory and endocytic intracellular trafficking in the endosomal/prevacuolar compartments. The sequence is that of PRA1 family protein F1 (PRA1F1) from Arabidopsis thaliana (Mouse-ear cress).